Reading from the N-terminus, the 425-residue chain is MFGLNKTPSFGSTGTQNQNTGTSAGTGLFSSNTFGNNTQANTPASTGFGGVTGGAFGQTKPQTGGSLFGNKPNATSTTPGLNLFGQNPQAAPGGSLFGASTTKPQAPGGLFNQNQTQAQPAQAAPTGGLFGLSGQNQTQSQTQPAQANTSLFGQSNIGTTGGLFDQNRPNTSTFGQFSTQPASAGLFGQSTQPSGSTGFGLSNNTQTTPFFSAAQQQPSTTQLPSNPAINATTRYSSLNANTQKFLDDLDKEIFSQIQLAEELQTKLGTVSELVESVPNDVAEVQRRLSSVSTALLIDSDEIETTKRVVDEDTSNARISSRILDVFKTPGATYPFASNDPLMNYFEQFTENAKKRTDLYAATIGELEQHLEQVETTPQNNSPEALLKTIKEEHKLFMALSNRFAQVHDEVKRLQVNTSTSLPFIS.

Positions 1-10 (MFGLNKTPSF) are enriched in polar residues. Residues 1–207 (MFGLNKTPSF…GFGLSNNTQT (207 aa)) form a disordered region. Residues 11-27 (GSTGTQNQNTGTSAGTG) are compositionally biased toward low complexity. Residues 28 to 45 (LFSSNTFGNNTQANTPAS) are compositionally biased toward polar residues. Positions 47 to 56 (GFGGVTGGAF) are enriched in gly residues. The segment covering 72 to 89 (PNATSTTPGLNLFGQNPQ) has biased composition (polar residues). Low complexity-rich tracts occupy residues 112 to 126 (NQNQTQAQPAQAAPT) and 135 to 150 (QNQTQSQTQPAQANTS). A compositionally biased stretch (polar residues) spans 167-207 (NRPNTSTFGQFSTQPASAGLFGQSTQPSGSTGFGLSNNTQT). Serine 289 and serine 290 each carry phosphoserine.

Its subcellular location is the cytoplasm. It is found in the nucleus. The protein resides in the nuclear pore complex. Functions as a component of the nuclear pore complex (NPC). NPC components, collectively referred to as nucleoporins (NUPs), can play the role of both NPC structural components and of docking or interaction partners for transiently associated nuclear transport factors. Active directional transport is assured by both, a Phe-Gly (FG) repeat affinity gradient for these transport factors across the NPC and a transport cofactor concentration gradient across the nuclear envelope. The sequence is that of Nucleoporin nup45 (nup45) from Schizosaccharomyces pombe (strain 972 / ATCC 24843) (Fission yeast).